A 126-amino-acid polypeptide reads, in one-letter code: Fluoride-specific ion channel FluC (126 aa).

4 helical membrane passes run 4-24, 36-56, 67-85, and 101-121; these read LLLV…TSAW, GTLL…TASL, LFLA…SFNY, and AYLL…TLLV. Na(+)-binding residues include Gly-75 and Thr-78.

Belongs to the fluoride channel Fluc/FEX (TC 1.A.43) family.

Its subcellular location is the cell inner membrane. The enzyme catalyses fluoride(in) = fluoride(out). Its activity is regulated as follows. Na(+) is not transported, but it plays an essential structural role and its presence is essential for fluoride channel function. Its function is as follows. Fluoride-specific ion channel. Important for reducing fluoride concentration in the cell, thus reducing its toxicity. The chain is Fluoride-specific ion channel FluC from Anaeromyxobacter sp. (strain K).